The following is a 279-amino-acid chain: HTH-type transcriptional regulator BhcR (279 aa).

A compositionally biased stretch (basic residues) spans 1–13 (MSVQIRKRGRPRG). Residues 1–21 (MSVQIRKRGRPRGRAGGLGAE) are disordered. The region spanning 26 to 87 (IRALDRALDI…SQTQAWHVGP (62 aa)) is the HTH iclR-type domain. A DNA-binding region (H-T-H motif) is located at residues 47–66 (LTEIAQRLDMAPSTVHRVLV). Positions 102–271 (LVERARPLLR…ARELSFGMAP (170 aa)) constitute an IclR-ED domain.

Transcriptional regulator of the bhc gene cluster involved in glycolate and glyoxylate assimilation via the beta-hydroxyaspartate cycle (BHAC). Glyoxylate negatively affects the interaction of BhcR with the promoter region of the bhc gene cluster. This is HTH-type transcriptional regulator BhcR from Paracoccus denitrificans (strain Pd 1222).